The chain runs to 350 residues: Phosphate acyltransferase (350 aa).

It belongs to the PlsX family. As to quaternary structure, homodimer. Probably interacts with PlsY.

The protein localises to the cytoplasm. The enzyme catalyses a fatty acyl-[ACP] + phosphate = an acyl phosphate + holo-[ACP]. It functions in the pathway lipid metabolism; phospholipid metabolism. Functionally, catalyzes the reversible formation of acyl-phosphate (acyl-PO(4)) from acyl-[acyl-carrier-protein] (acyl-ACP). This enzyme utilizes acyl-ACP as fatty acyl donor, but not acyl-CoA. The sequence is that of Phosphate acyltransferase from Phenylobacterium zucineum (strain HLK1).